The following is a 123-amino-acid chain: Small ribosomal subunit protein uS12 (123 aa).

The segment at 1-30 is disordered; it reads MPTIQQLVRKGRQDKVEKNKTPALEGSPQR. A compositionally biased stretch (basic and acidic residues) spans 11–20; sequence GRQDKVEKNK. The residue at position 89 (Asp-89) is a 3-methylthioaspartic acid.

This sequence belongs to the universal ribosomal protein uS12 family. Part of the 30S ribosomal subunit. Contacts proteins S8 and S17. May interact with IF1 in the 30S initiation complex.

Its function is as follows. With S4 and S5 plays an important role in translational accuracy. Functionally, interacts with and stabilizes bases of the 16S rRNA that are involved in tRNA selection in the A site and with the mRNA backbone. Located at the interface of the 30S and 50S subunits, it traverses the body of the 30S subunit contacting proteins on the other side and probably holding the rRNA structure together. The combined cluster of proteins S8, S12 and S17 appears to hold together the shoulder and platform of the 30S subunit. This is Small ribosomal subunit protein uS12 (rpsL) from Streptomyces avermitilis (strain ATCC 31267 / DSM 46492 / JCM 5070 / NBRC 14893 / NCIMB 12804 / NRRL 8165 / MA-4680).